Consider the following 512-residue polypeptide: Glutathione-binding protein GsiB (512 aa).

Residues 1–26 (MTQFITHKWLAALGLASSIAAFPALA) form the signal peptide.

This sequence belongs to the bacterial solute-binding protein 5 family. In terms of assembly, the complex is composed of two ATP-binding proteins (GsiA), two transmembrane proteins (GsiC and GsiD) and a solute-binding protein (GsiB).

It localises to the periplasm. Functionally, part of the ABC transporter complex GsiABCD involved in glutathione import. Binds glutathione. The polypeptide is Glutathione-binding protein GsiB (Salmonella choleraesuis (strain SC-B67)).